We begin with the raw amino-acid sequence, 276 residues long: Secretagogin (276 aa).

EF-hand domains follow at residues 12–47 (LDAA…MLTK), 71–93 (DVSK…EDEN), 105–140 (DSSV…LFLH), 149–184 (KLEE…QENF), 197–232 (ERKR…MMEL), and 240–276 (VDLD…KINP). Residues D71, S73, D75, C77, E82, D118, D120, S122, E129, D162, N164, D166, R168, D173, D210, S212, T214, E221, D254, N256, D258, K260, and E265 each contribute to the Ca(2+) site.

Its subcellular location is the cytoplasm. It localises to the secreted. It is found in the cytoplasmic vesicle. The protein resides in the secretory vesicle membrane. The sequence is that of Secretagogin (SCGN) from Bos taurus (Bovine).